Here is a 402-residue protein sequence, read N- to C-terminus: Endo-polygalacturonase (402 aa).

An N-terminal signal peptide occupies residues 1 to 23 (MEYQSGKRVLSLSLGLIGLFSAS). D249 serves as the catalytic Proton donor. H277 is an active-site residue.

This sequence belongs to the glycosyl hydrolase 28 family. Monomer.

The protein localises to the secreted. It carries out the reaction (1,4-alpha-D-galacturonosyl)n+m + H2O = (1,4-alpha-D-galacturonosyl)n + (1,4-alpha-D-galacturonosyl)m.. Its function is as follows. Involved in maceration and soft-rotting of plant tissue. The polypeptide is Endo-polygalacturonase (peh) (Pectobacterium carotovorum subsp. carotovorum (Erwinia carotovora subsp. carotovora)).